A 357-amino-acid chain; its full sequence is Decorin (357 aa).

An N-terminal signal peptide occupies residues 1–16 (MRLVLLFVLLLPVCLA). A propeptide spanning residues 17-30 (TRFHQKGLFDFMIE) is cleaved from the precursor. Ser46 is a glycosylation site (O-linked (Xyl...) (glycosaminoglycan) serine). 2 cysteine pairs are disulfide-bonded: Cys52–Cys58 and Cys56–Cys65. LRR repeat units lie at residues 71–91 (ERVP…NNKI), 92–115 (TEIK…NNKI), 116–139 (SKIS…KNNL), 140–160 (KELP…ENEI), 161–184 (SKLR…TNPL), 185–210 (KSSG…DTNI), 211–231 (TSIP…GNKI), 232–255 (SKID…FNSI), 256–279 (SSVE…NNEL), 280–302 (VRVP…NNKI), 303–332 (ASIG…SNPV), and 333–357 (QYWE…GNYK). An N-linked (GlcNAc...) asparagine glycan is attached at Asn209. Asn260 is a glycosylation site (N-linked (GlcNAc...) asparagine). Cys311 and Cys344 are joined by a disulfide.

It belongs to the small leucine-rich proteoglycan (SLRP) family. SLRP class I subfamily. Binds to type I and type II collagen, to fibronectin and TGF-beta. Forms a ternary complex with MFAP2 and ELN. In terms of processing, the attached glycosaminoglycan chain can be either chondroitin sulfate or dermatan sulfate depending upon the tissue of origin.

It is found in the secreted. Its subcellular location is the extracellular space. The protein localises to the extracellular matrix. Its function is as follows. May affect the rate of fibrils formation. The sequence is that of Decorin (DCN) from Gallus gallus (Chicken).